A 424-amino-acid polypeptide reads, in one-letter code: Hemagglutinin-esterase (424 aa).

The first 16 residues, 1-16 (MFLLPRFVLVSCIIGS), serve as a signal peptide directing secretion. Residues 7 to 127 (FVLVSCIIGS…SNDIWMQNKG (121 aa)) are esterase domain 1. The Virion surface segment spans residues 17–392 (LGFDNPPTNV…PICVYDPLPI (376 aa)). The active-site Nucleophile is the serine 40. A disulfide bond links cysteine 44 and cysteine 65. N-linked (GlcNAc...) asparagine; by host glycosylation is found at asparagine 54, asparagine 89, asparagine 153, asparagine 236, and asparagine 301. Intrachain disulfides connect cysteine 113/cysteine 162, cysteine 197/cysteine 276, and cysteine 205/cysteine 249. The interval 128–266 (LFYTQVYKNM…GNYLAISNEL (139 aa)) is receptor binding. Residues 267–379 (LLTVPTKAIC…RCPTAADINT (113 aa)) are esterase domain 2. An intrachain disulfide couples cysteine 307 to cysteine 312. N-linked (GlcNAc...) asparagine; by host glycosylation is present at asparagine 316. Residues aspartate 326 and histidine 329 each act as charge relay system in the active site. Cysteine 347 and cysteine 371 are disulfide-bonded. A glycan (N-linked (GlcNAc...) asparagine; by host) is linked at asparagine 358. A helical membrane pass occupies residues 393–413 (ILLGILLGVAVIIIVVLLLYF). Over 414–424 (MVDNGTRLHDA) the chain is Intravirion. N-linked (GlcNAc...) asparagine; by host glycosylation is present at asparagine 417.

It belongs to the influenza type C/coronaviruses hemagglutinin-esterase family. In terms of assembly, homodimer; disulfide-linked. Forms a complex with the M protein in the pre-Golgi. Associates then with S-M complex to form a ternary complex S-M-HE. Post-translationally, N-glycosylated in the RER. In terms of processing, N-glycosylated in the host RER.

It localises to the virion membrane. The protein resides in the host cell membrane. It catalyses the reaction N-acetyl-9-O-acetylneuraminate + H2O = N-acetylneuraminate + acetate + H(+). The enzyme catalyses N-acetyl-4-O-acetylneuraminate + H2O = N-acetylneuraminate + acetate + H(+). Its function is as follows. Structural protein that makes short spikes at the surface of the virus. Contains receptor binding and receptor-destroying activities. Mediates de-O-acetylation of N-acetyl-4-O-acetylneuraminic acid, which is probably the receptor determinant recognized by the virus on the surface of erythrocytes and susceptible cells. This receptor-destroying activity is important for virus release as it probably helps preventing self-aggregation and ensures the efficient spread of the progeny virus from cell to cell. May serve as a secondary viral attachment protein for initiating infection, the spike protein being the major one. May become a target for both the humoral and the cellular branches of the immune system. This chain is Hemagglutinin-esterase, found in Bovine coronavirus (strain 98TXSF-110-ENT) (BCoV-ENT).